Consider the following 475-residue polypeptide: Aspartyl/glutamyl-tRNA(Asn/Gln) amidotransferase subunit B (475 aa).

Belongs to the GatB/GatE family. GatB subfamily. In terms of assembly, heterotrimer of A, B and C subunits.

The enzyme catalyses L-glutamyl-tRNA(Gln) + L-glutamine + ATP + H2O = L-glutaminyl-tRNA(Gln) + L-glutamate + ADP + phosphate + H(+). The catalysed reaction is L-aspartyl-tRNA(Asn) + L-glutamine + ATP + H2O = L-asparaginyl-tRNA(Asn) + L-glutamate + ADP + phosphate + 2 H(+). Allows the formation of correctly charged Asn-tRNA(Asn) or Gln-tRNA(Gln) through the transamidation of misacylated Asp-tRNA(Asn) or Glu-tRNA(Gln) in organisms which lack either or both of asparaginyl-tRNA or glutaminyl-tRNA synthetases. The reaction takes place in the presence of glutamine and ATP through an activated phospho-Asp-tRNA(Asn) or phospho-Glu-tRNA(Gln). This Chromobacterium violaceum (strain ATCC 12472 / DSM 30191 / JCM 1249 / CCUG 213 / NBRC 12614 / NCIMB 9131 / NCTC 9757 / MK) protein is Aspartyl/glutamyl-tRNA(Asn/Gln) amidotransferase subunit B.